The primary structure comprises 274 residues: NH(3)-dependent NAD(+) synthetase (274 aa).

An ATP-binding site is contributed by 46 to 53 (GISGGQDS). Aspartate 52 is a binding site for Mg(2+). Position 140 (arginine 140) interacts with deamido-NAD(+). Threonine 160 contributes to the ATP binding site. Glutamate 165 provides a ligand contact to Mg(2+). 2 residues coordinate deamido-NAD(+): lysine 173 and aspartate 180. Residues lysine 189 and threonine 211 each coordinate ATP. Residue 260–261 (HK) coordinates deamido-NAD(+).

This sequence belongs to the NAD synthetase family. Homodimer.

It carries out the reaction deamido-NAD(+) + NH4(+) + ATP = AMP + diphosphate + NAD(+) + H(+). The protein operates within cofactor biosynthesis; NAD(+) biosynthesis; NAD(+) from deamido-NAD(+) (ammonia route): step 1/1. Catalyzes the ATP-dependent amidation of deamido-NAD to form NAD. Uses ammonia as a nitrogen source. This chain is NH(3)-dependent NAD(+) synthetase, found in Streptococcus sanguinis (strain SK36).